A 568-amino-acid chain; its full sequence is Kinetochore protein NDC80 homolog (568 aa).

The tract at residues 1–59 is disordered; that stretch reads MRGGAAGKRRTTVGFGGAPPPPPPSIEQQRHLFNSRDSDASFASSRPSSIGLGGRGASD. Basic and acidic residues predominate over residues 28-39; it reads QQRHLFNSRDSD. Residues 40 to 49 show a composition bias toward low complexity; that stretch reads ASFASSRPSS. Coiled coils occupy residues 241-334 and 433-469; these read KESL…AEVA and IESK…TKCD.

Belongs to the NDC80/HEC1 family. Component of the NDC80 complex, which consists of NDC80, NUF2, SPC24 and SPC25.

It localises to the chromosome. The protein localises to the centromere. Functionally, acts as a component of the essential kinetochore-associated NDC80 complex, which is required for chromosome segregation and spindle checkpoint activity to ensure proper cell division. In Arabidopsis thaliana (Mouse-ear cress), this protein is Kinetochore protein NDC80 homolog.